The primary structure comprises 101 residues: Small ribosomal subunit protein uS14 (101 aa).

This sequence belongs to the universal ribosomal protein uS14 family. Part of the 30S ribosomal subunit. Contacts proteins S3 and S10.

In terms of biological role, binds 16S rRNA, required for the assembly of 30S particles and may also be responsible for determining the conformation of the 16S rRNA at the A site. The polypeptide is Small ribosomal subunit protein uS14 (Burkholderia vietnamiensis (strain G4 / LMG 22486) (Burkholderia cepacia (strain R1808))).